We begin with the raw amino-acid sequence, 358 residues long: RuBisCO accumulation factor 1 (358 aa).

Residues 11 to 194 (VSAAEAAELI…RQAIEKLLTD (184 aa)) form an N-terminal alpha-helix region. Residues 218–344 (ARLIPVAGTF…VVLVLRPKKI (127 aa)) are C-terminal beta-sheet.

This sequence belongs to the RAF family. Homodimer. Forms an RbcL(8)-Raf1(8) complex. Forms complexes of many stoichiometries with RbcL with and without RbcS. RbcX and Raf1 can bind simultaneously to RbcL. Interacts with both RuBisCO subunits (ccbL, ccbS), GroEL, DnaK and alpha and beta phycocyanin (cpcA, cpcB) in pull-down experiments with tagged protein. C-terminally tagged Raf1 does not interact with either RuBisCO subunit, suggesting its C-terminus is involved in binding.

The protein localises to the cytoplasm. A major RuBisCO chaperone. Acts after GroEL-GroES chaperonin to fold and/or assemble the large subunit of RuBisCO (ccbL, rbcL). Cooperates with RbcX in RbcL folding, plays the major role in assembly of dimers into RbcL(8)-Raf1(8) intermediate complexes. RbcS replaces Raf1, leading to holoenzyme formation. In terms of biological role, required for optimal reconstitution of RbcL(8) upon expression in E.coli. Has been suggested to be involved in RuBisCO recycling and homeostasis rather than assembly. The polypeptide is RuBisCO accumulation factor 1 (Synechocystis sp. (strain ATCC 27184 / PCC 6803 / Kazusa)).